The following is a 523-amino-acid chain: Probable malate:quinone oxidoreductase 1 (523 aa).

This sequence belongs to the MQO family. FAD serves as cofactor.

The enzyme catalyses (S)-malate + a quinone = a quinol + oxaloacetate. Its pathway is carbohydrate metabolism; tricarboxylic acid cycle; oxaloacetate from (S)-malate (quinone route): step 1/1. This chain is Probable malate:quinone oxidoreductase 1, found in Pseudomonas aeruginosa (strain ATCC 15692 / DSM 22644 / CIP 104116 / JCM 14847 / LMG 12228 / 1C / PRS 101 / PAO1).